The primary structure comprises 246 residues: Salivary antigen SP32 (246 aa).

Residues 1–23 (MSGHILTVGLIVVVAHCATLSSS) form the signal peptide. A disordered region spans residues 51–160 (DKFYPDISDD…PDLSKYKNSP (110 aa)). Basic and acidic residues predominate over residues 65–78 (VVRDNGRKGGDRGR). The segment covering 79 to 124 (QSTPSGKESHPSATQTGGRRPSQSPCGESRPSGSATSGRRPSQSPR) has biased composition (polar residues). The span at 141–155 (QQDRRQNKKQPDLSK) shows a compositional bias: basic and acidic residues.

Interacts with human DSG1. Interacts with human DSG3. As to expression, salivary gland (at protein level).

The protein resides in the secreted. Down-regulates the expression of CD86 and HLA-DR on the surface of lipopolysaccharide (LPS)-stimulated human peripheral blood mononuclear cells (PBMCs). Reduces LPS-induced secretion of IL-1beta/IL1B in human PBMCs. Reduces LPS-induced secretion of various cytokines, such as IL-1beta, TNF-alpha/TNF, MCP-1/CCL2, IL6, IL27 and IL-1alpha/IL1A, in host cultured macrophages probably via inhibition of NF-kappa-B signaling pathway. Reduces production of IFN-gamma/IFNG, IL4 and IL6 in human lymphocytes activated with PMA/ionomycin. Exhibits anti-inflammatory activity in carrageenan-induced paw edema model in rats. The polypeptide is Salivary antigen SP32 (Phlebotomus papatasi (Sandfly)).